The chain runs to 318 residues: NLP effector protein 7 (318 aa).

The N-terminal stretch at 1 to 19 is a signal peptide; sequence MRLFAFLWSSVAFLSTVQA. Over residues 23-41 the composition is skewed to low complexity; that stretch reads QTASQTQDDSSTPTPTPTD. 2 disordered regions span residues 23–42 and 51–96; these read QTASQTQDDSSTPTPTPTDK and RTKT…TPDP. A compositionally biased stretch (polar residues) spans 55–65; that stretch reads PMATPNRTIMP. Residue N60 is glycosylated (N-linked (GlcNAc...) asparagine). Residues 73 to 96 show a composition bias toward pro residues; sequence TEPPTPEPTYLPTPSPTPAPTPDP. A Conserved undecapeptide motif I motif is present at residues 185-195; that stretch reads AIMYSWYFPKD. A Hepta-peptide GHRHDWE motif II motif is present at residues 202-208; the sequence is GHRHDWE.

It belongs to the Necrosis inducing protein (NPP1) family.

Its subcellular location is the secreted. In terms of biological role, secreted effector that contributes moderately to virulence during infection by P.capsici. Does not cause visible reaction of C.annuum for several days after inoculation, but by 7 days after inoculation, small necrotic lesions become visible. Leads only to chlorotic areas, without necrosis at 7 days after non-host N.benthamiana leaves infection. The sequence is that of NLP effector protein 7 from Phytophthora capsici.